The primary structure comprises 1804 residues: MEPWSRWKTKRWIWDLTISTLALTFLFQAREVRGAAPVDILKALDFHNSPVGISKTTGFCTNRKNSKDPDVAYRVTEEAQISAPTKQLFPGGIFPQDFSILFTIKPKKGTQAFLLSLYNEHGIQQLGVEVGRSPVFLFEDHTGKPTPENYPLFSTVNIADGKWHRVAISVEKKTVTMIVDCKKKITKPLDRSERSIVDTNGIMVFGTRILETDVFQGDIQQFLITGDPKAAYDYCDHYSPDCDLTSKAAQAQEPHIDEYAPEDIIEYDYEYGETDYKEAESVTEMPTFTEETVAQTEANIVDDFQDYNYGTMEPYQTETPRRVSGSNEPNPVEEGFTEEYLTGEDYDVQRNTSEDILYGNKGVDGRDSDLLVDGDLGEYDFYEYKEYEERTTTSPNEEFGPGVPAETDFTETSINGHGAYGEKGQKGEPAVVEPGMLVEGPPGPAGPAGLMGPPGLQGPSGLPGDPGDRGPPGRPGLPGADGLPGPPGTMLMLPFRYGGDGSKGPTISAQEAQAQAILQQARIALRGPPGPMGLTGRPGPVGGPGSAGAKGESGDPGPQGPRGVQGPPGPTGKPGKRGRPGADGGRGMPGESGSKGDRGFDGLPGLPGDKGHRGERGPQGPPGLPGDDGMRGEDGEIGPRGLPGEAGPRGLLGPRGTPGPPGQPGIGGIDGPQGPKGNMGPQGEPGPPGQQGNPGPQGLPGPQGPIGPPGEKGPQGKPGLAGLPGADGPPGHPGKEGQSGEKGALGPPGPQGPIGYPGPRGVKGADGVRGLKGSKGEKGEDGFPGFKGDMGLKGDRGEVGQVGPRGEDGPEGPKGRAGPTGDPGPSGQAGEKGKLGVPGLPGYPGRQGPKGSTGFPGFPGANGEKGARGIAGKPGPRGQRGPTGPRGSRGARGPTGKPGPKGTSGGDGPPGPPGERGPQGPQGPVGFPGPKGPPGPAGKDGLPGHPGQRGETGFQGKTGPPGPGGVVGPQGPTGETGPIGERGHPGPPGPPGEQGLPGAAGKEGAKGDPGPQGISGKDGPAGIRGFPGERGLPGAQGAPGLKGGEGPQGPQGPVGSPGERGSAGTAGPIGLPGRPGPQGPPGPAGEKGAPGEKGPQGPAGRDGVQGPVGLPGPAGPAGSPGEDGDKGEIGEPGQKGSKGDKGENGPPGPPGLQGPVGAPGIAGGDGEPGPRGQQGMFGQKGDEGARGFPGLPGPIGLQGLPGPPGEKGENGDVGPMGPPGPPGPRGPQGPNGADGPQGPPGSIGSVGVVGDKGEPGEAGNPGPPGEAGSGGLKGERGEKGEAGPPGAAGPAGIKGPPGDDGPKGNPGPVGFPGDPGPPGEPGPAGQDGVGGDKGEDGDPGQPGPPGPSGEAGPPGPPGKRGPPGASGSEGRQGEKGAKGEAGAEGPPGKTGPVGPQGPSGKPGPEGLRGIPGPVGEQGLPGAAGQDGPPGPLGPPGLPGLKGDPGSKGEKGHPGLIGLIGPPGEQGEKGDRGLPGTQGSPGAKGDGGIPGPAGPIGPPGPPGLPGPAGPKGNKGSSGPTGQKGDSGMPGPPGPPGPPGEVIQPLPILSPKKTRRHTESIQGDAGDNILDYSDGMEEIFGSLNSLKQDIEHMKFPMGTQTNPARTCKDLQLSHPDFPDGEYWIDPNQGCSGDSFKVYCNFTAGGETCIYPDKKSEGVRISSWPKEKPGSWYSEFKRGKLLSYLDVEGNSINMVQMTFLKLLTASARQNFTYNCHQSAAWYDVLSGSYDKALRFLGSNDEEMSYENNPHIKALYDGCASRKGYEKTVIEINTPKIDQVPIIDVMINDFGDQNQKFGFEVGPACFLG.

A signal peptide spans 1–34 (MEPWSRWKTKRWIWDLTISTLALTFLFQAREVRG). A propeptide spans 35 to 511 (AAPVDILKAL…SKGPTISAQE (477 aa)) (N-terminal propeptide). 2 disulfides stabilise this stretch: Cys60/Cys242 and Cys181/Cys235. A Laminin G-like domain is found at 70-242 (DVAYRVTEEA…DYCDHYSPDC (173 aa)). Residues 229–417 (KAAYDYCDHY…DFTETSINGH (189 aa)) form a nonhelical region region. Residues 315-329 (YQTETPRRVSGSNEP) are compositionally biased toward polar residues. 2 disordered regions span residues 315-334 (YQTETPRRVSGSNEPNPVEE) and 433-506 (EPGM…KGPT). The segment at 418 to 506 (GAYGEKGQKG…YGGDGSKGPT (89 aa)) is triple-helical region (interrupted). In terms of domain architecture, Collagen-like 1 spans 440 to 488 (GPPGPAGPAGLMGPPGLQGPSGLPGDPGDRGPPGRPGLPGADGLPGPPG). Composition is skewed to low complexity over residues 447-465 (PAGLMGPPGLQGPSGLPGD) and 477-494 (LPGADGLPGPPGTMLMLP). The short nonhelical segment stretch occupies residues 507–509 (ISA). The telopeptide stretch occupies residues 510-527 (QEAQAQAILQQARIALRG). Residues 526 to 1567 (RGPPGPMGLT…SIQGDAGDNI (1042 aa)) are disordered. 2 consecutive Collagen-like domains span residues 527 to 584 (GPPG…GADG) and 567 to 623 (PPGP…GPPG). The tract at residues 528–1540 (PPGPMGLTGR…PGPPGPPGEV (1013 aa)) is triple-helical region. Gly residues-rich tracts occupy residues 539-548 (GPVGGPGSAG) and 581-590 (GADGGRGMPG). Lys610 carries the post-translational modification Allysine. Positions 639–655 (PRGLPGEAGPRGLLGPR) are enriched in low complexity. Residues 697-708 (QGLPGPQGPIGP) show a composition bias toward pro residues. Over residues 715-726 (QGKPGLAGLPGA) the composition is skewed to low complexity. A Collagen-like 4 domain is found at 728–781 (GPPGHPGKEGQSGEKGALGPPGPQGPIGYPGPRGVKGADGVRGLKGSKGEKGED). A compositionally biased stretch (basic and acidic residues) spans 805–814 (RGEDGPEGPK). Low complexity-rich tracts occupy residues 873–901 (KPGPRGQRGPTGPRGSRGARGPTGKPGPK), 916–925 (RGPQGPQGPV), and 969–979 (PQGPTGETGPI). A compositionally biased stretch (gly residues) spans 1040–1049 (GLKGGEGPQG). A compositionally biased stretch (pro residues) spans 1074 to 1083 (RPGPQGPPGP). Over residues 1084-1108 (AGEKGAPGEKGPQGPAGRDGVQGPV) the composition is skewed to low complexity. A compositionally biased stretch (gly residues) spans 1160–1169 (GIAGGDGEPG). Over residues 1216 to 1227 (MGPPGPPGPRGP) the composition is skewed to pro residues. Composition is skewed to low complexity over residues 1240 to 1249 (PGSIGSVGVV) and 1282 to 1296 (AGPPGAAGPAGIKGP). The span at 1341-1360 (QPGPPGPSGEAGPPGPPGKR) shows a compositional bias: pro residues. 2 stretches are compositionally biased toward low complexity: residues 1383–1392 (AEGPPGKTGP) and 1417–1426 (QGLPGAAGQD). Collagen-like domains lie at 1427-1482 (GPPG…SPGA) and 1481-1539 (GAKG…PPGE). A compositionally biased stretch (pro residues) spans 1428–1437 (PPGPLGPPGL). Residue Lys1450 is modified to Allysine. Residues 1453–1462 (PGLIGLIGPP) show a composition bias toward low complexity. Gly residues predominate over residues 1481–1490 (GAKGDGGIPG). The span at 1491-1507 (PAGPIGPPGPPGLPGPA) shows a compositional bias: pro residues. The segment covering 1509–1519 (PKGNKGSSGPT) has biased composition (low complexity). Over residues 1528–1537 (PGPPGPPGPP) the composition is skewed to pro residues. A nonhelical region (C-terminal) region spans residues 1541-1561 (IQPLPILSPKKTRRHTESIQG). Residues 1562 to 1804 (DAGDNILDYS…FEVGPACFLG (243 aa)) constitute a propeptide, C-terminal propeptide. The region spanning 1575–1803 (EEIFGSLNSL…GFEVGPACFL (229 aa)) is the Fibrillar collagen NC1 domain. A disulfide bridge links Cys1605 with Cys1637. Ca(2+) is bound by residues Asp1623, Asn1625, Gln1626, Cys1628, and Asp1631. Asn1638 is a glycosylation site (N-linked (GlcNAc...) asparagine). Cystine bridges form between Cys1646-Cys1801 and Cys1712-Cys1755.

This sequence belongs to the fibrillar collagen family. In terms of assembly, trimers composed of three different chains: alpha 1(XI), alpha 2(XI), and alpha 3(XI). Alpha 3(XI) is a post-translational modification of alpha 1(II). Alpha 1(V) can also be found instead of alpha 3(XI)=1(II). In terms of processing, prolines at the third position of the tripeptide repeating unit (G-X-Y) are hydroxylated in some or all of the chains. N-glycosylated.

The protein resides in the secreted. The protein localises to the extracellular space. It localises to the extracellular matrix. In terms of biological role, may play an important role in fibrillogenesis by controlling lateral growth of collagen II fibrils. The protein is Collagen alpha-1(XI) chain (Col11a1) of Mus musculus (Mouse).